Consider the following 301-residue polypeptide: Putative ribosomal RNA methyltransferase PB17E12.10c (301 aa).

S-adenosyl-L-methionine contacts are provided by Gly-87, Trp-89, Asp-107, and Asp-186. Lys-247 functions as the Proton acceptor in the catalytic mechanism.

This sequence belongs to the class I-like SAM-binding methyltransferase superfamily. RNA methyltransferase RlmE family.

The enzyme catalyses a uridine in rRNA + S-adenosyl-L-methionine = a 2'-O-methyluridine in rRNA + S-adenosyl-L-homocysteine + H(+). This is Putative ribosomal RNA methyltransferase PB17E12.10c from Schizosaccharomyces pombe (strain 972 / ATCC 24843) (Fission yeast).